The chain runs to 681 residues: Hydroxyproline O-galactosyltransferase GALT6 (681 aa).

The Cytoplasmic segment spans residues 1–28; it reads MRKPKLSKLERLEKFDIFVSLSKQRSVQ. The helical; Signal-anchor for type II membrane protein transmembrane segment at 29-49 threads the bilayer; it reads ILMAVGLLYMLLITFEIPFVF. Over 50 to 681 the chain is Lumenal; that stretch reads KTGLSSLSQD…TGKPQCCNMR (632 aa). The tract at residues 57-80 is disordered; that stretch reads SQDPLTRPEKHNSQRELQERRAPT. Residues 62 to 78 are compositionally biased toward basic and acidic residues; it reads TRPEKHNSQRELQERRA. The Galectin domain occupies 187-401; sequence NIMELPCGLT…DIDVHSVFAG (215 aa). N629 carries N-linked (GlcNAc...) asparagine glycosylation.

The protein belongs to the glycosyltransferase 31 family. Mn(2+) serves as cofactor. Expressed in junveile leaves and stems, and at lower levels in cauline leaves and siliques.

It localises to the golgi apparatus membrane. It functions in the pathway protein modification; protein glycosylation. In terms of biological role, possesses hydroxyproline O-galactosyltransferase activity. Transfers galactose from UDP-galactose to hydroxyproline residues in the arabinogalactan proteins (AGPs). Is specific for AGPs containing non-contiguous peptidyl hydroxyproline residues. Utilizes UDP-galactose solely as sugar donor. The addition of galactose onto the peptidyl hydroxyproline residues in AGP core proteins represents the first committed step in arabinogalactan polysaccharide addition. AGP glycans play essential roles in both vegetative and reproductive plant growth. This Arabidopsis thaliana (Mouse-ear cress) protein is Hydroxyproline O-galactosyltransferase GALT6.